Reading from the N-terminus, the 449-residue chain is MRECISIHVGQAGVQIGNACWELYCLEHGIQPDGQMPSDKTIGGGDDSFNTFFSETGAGKHVPRAVFVDLEPTVIDEVRTGTYRQLFHPEQLITGKEDAANNYARGHYTIGKEIIDLVLDRIRKLADQCTGLQGFLVFHSFGGGTGSGFTSLLMERLSVDYGKKSKLEFSIYPAPQVSTAVVEPYNSILTTHTTLEHSDCAFMVDNEAIYDICRRNLDIERPTYTNLNRLISQIVSSITASLRFDGALNVDLTEFQTNLVPYPRIHFPLATYAPVISAEKAYHEQLTVAEITNACFEPANQMVKCDPRHGKYMACCLLYRGDVVPKDVNAAIATIKTKRTIQFVDWCPTGFKVGINYQPPTVVPGGDLAKVQRAVCMLSNTTAVAEAWARLDHKFDLMYAKRAFVHWYVGEGMEEGEFSEAREDMAALEKDYEEVGADSADGEDEGEEY.

Positions 1–4 (MREC) match the MREC motif motif. Residue Q11 coordinates GTP. Residue K40 is modified to N6-acetyllysine. GTP contacts are provided by E71, S140, G144, T145, T179, N206, and N228. E71 contributes to the Mg(2+) binding site. E254 is an active-site residue. Y282 is modified (3'-nitrotyrosine). Residues 429-449 (EKDYEEVGADSADGEDEGEEY) form a disordered region. Residues 431 to 449 (DYEEVGADSADGEDEGEEY) are compositionally biased toward acidic residues. At Y432 the chain carries Phosphotyrosine. S439 carries the phosphoserine modification. 3'-nitrotyrosine is present on Y449.

Belongs to the tubulin family. In terms of assembly, dimer of alpha and beta chains. A typical microtubule is a hollow water-filled tube with an outer diameter of 25 nm and an inner diameter of 15 nM. Alpha-beta heterodimers associate head-to-tail to form protofilaments running lengthwise along the microtubule wall with the beta-tubulin subunit facing the microtubule plus end conferring a structural polarity. Microtubules usually have 13 protofilaments but different protofilament numbers can be found in some organisms and specialized cells. Mg(2+) serves as cofactor. Some glutamate residues at the C-terminus are polyglutamylated, resulting in polyglutamate chains on the gamma-carboxyl group. Polyglutamylation plays a key role in microtubule severing by spastin (SPAST). SPAST preferentially recognizes and acts on microtubules decorated with short polyglutamate tails: severing activity by SPAST increases as the number of glutamates per tubulin rises from one to eight, but decreases beyond this glutamylation threshold. Glutamylation is also involved in cilia motility. Post-translationally, some glutamate residues at the C-terminus are monoglycylated but not polyglycylated due to the absence of functional TTLL10 in human. Monoglycylation is mainly limited to tubulin incorporated into cilia and flagella axonemes, which is required for their stability and maintenance. Flagella glycylation controls sperm motility. Both polyglutamylation and monoglycylation can coexist on the same protein on adjacent residues, and lowering glycylation levels increases polyglutamylation, and reciprocally. In terms of processing, acetylation of alpha chains at Lys-40 is located inside the microtubule lumen. This modification has been correlated with increased microtubule stability, intracellular transport and ciliary assembly. Methylation of alpha chains at Lys-40 is found in mitotic microtubules and is required for normal mitosis and cytokinesis contributing to genomic stability. Post-translationally, nitration of Tyr-449 is irreversible and interferes with normal dynein intracellular distribution. In terms of processing, undergoes a tyrosination/detyrosination cycle, the cyclic removal and re-addition of a C-terminal tyrosine residue by the enzymes tubulin tyrosine carboxypeptidase (MATCAP1/KIAA0895L, VASH1 or VASH2) and tubulin tyrosine ligase (TTL), respectively. Tyrosination promotes microtubule interaction with CAP-Gly domain-containing proteins such as CLIP1, CLIP2 and DCTN1. Tyrosination regulates the initiation of dynein-dynactin motility via interaction with DCTN1, which brings the dynein-dynactin complex into contact with microtubules. In neurons, tyrosinated tubulins mediate the initiation of retrograde vesicle transport. Post-translationally, detyrosination is involved in metaphase plate congression by guiding chromosomes during mitosis: detyrosination promotes interaction with CENPE, promoting pole-proximal transport of chromosomes toward the equator. Detyrosination increases microtubules-dependent mechanotransduction in dystrophic cardiac and skeletal muscle. In cardiomyocytes, detyrosinated microtubules are required to resist to contractile compression during contraction: detyrosination promotes association with desmin (DES) at force-generating sarcomeres, leading to buckled microtubules and mechanical resistance to contraction.

Its subcellular location is the cytoplasm. It localises to the cytoskeleton. The enzyme catalyses GTP + H2O = GDP + phosphate + H(+). In terms of biological role, tubulin is the major constituent of microtubules, a cylinder consisting of laterally associated linear protofilaments composed of alpha- and beta-tubulin heterodimers. Microtubules grow by the addition of GTP-tubulin dimers to the microtubule end, where a stabilizing cap forms. Below the cap, tubulin dimers are in GDP-bound state, owing to GTPase activity of alpha-tubulin. The chain is Tubulin alpha-1C chain (TUBA1C) from Homo sapiens (Human).